The chain runs to 322 residues: Olfactory receptor 11L1 (322 aa).

The Extracellular portion of the chain corresponds to 1–25; sequence MEPQNTSTVTNFQLLGFQNLLEWQA. Asn-5 is a glycosylation site (N-linked (GlcNAc...) asparagine). The helical transmembrane segment at 26–46 threads the bilayer; sequence LLFVIFLLIYCLTIIGNVVII. Topologically, residues 47-54 are cytoplasmic; the sequence is TVVSQGLR. A helical transmembrane segment spans residues 55-75; it reads LHSPMYMFLQHLSFLEVWYTS. The Extracellular portion of the chain corresponds to 76–99; the sequence is TTVPLLLANLLSWGQAISFSACMA. A disulfide bridge links Cys-97 with Cys-189. Residues 100–120 traverse the membrane as a helical segment; sequence QLYFFVFLGATECFLLAFMAY. Over 121–139 the chain is Cytoplasmic; the sequence is DRYLAICSPLRYPFLMHRG. The helical transmembrane segment at 140–160 threads the bilayer; sequence LCARLVVVSWCTGVSTGFLPS. The Extracellular portion of the chain corresponds to 161-197; it reads LMISRLDFCGRNQINHFFCDLPPLMQLSCSRVYITEV. The helical transmembrane segment at 198 to 217 threads the bilayer; it reads TIFILSIAVLCICFFLTLGP. Residues 218-237 lie on the Cytoplasmic side of the membrane; sequence YVFIVSSILRIPSTSGRRKT. A helical transmembrane segment spans residues 238–258; sequence FSTCGSHLAVVTLYYGTMISM. Residues 259–271 are Extracellular-facing; the sequence is YVCPSPHLLPEIN. Residues 272-292 traverse the membrane as a helical segment; sequence KIISVFYTVVTPLLNPVIYSL. At 293–322 the chain is on the cytoplasmic side; sequence RNKDFKEAVRKVMRRKCGILWSTSKRKFLY.

This sequence belongs to the G-protein coupled receptor 1 family.

Its subcellular location is the cell membrane. In terms of biological role, odorant receptor. The polypeptide is Olfactory receptor 11L1 (OR11L1) (Homo sapiens (Human)).